A 273-amino-acid chain; its full sequence is 4-hydroxy-tetrahydrodipicolinate reductase (273 aa).

Residues 8–13, Asp35, 103–105, and 129–132 contribute to the NAD(+) site; these read GALGRM, GTT, and SQNY. His161 serves as the catalytic Proton donor/acceptor. His162 contacts (S)-2,3,4,5-tetrahydrodipicolinate. Residue Lys165 is the Proton donor of the active site. 171-172 provides a ligand contact to (S)-2,3,4,5-tetrahydrodipicolinate; that stretch reads GT.

It belongs to the DapB family.

It localises to the cytoplasm. The catalysed reaction is (S)-2,3,4,5-tetrahydrodipicolinate + NAD(+) + H2O = (2S,4S)-4-hydroxy-2,3,4,5-tetrahydrodipicolinate + NADH + H(+). It catalyses the reaction (S)-2,3,4,5-tetrahydrodipicolinate + NADP(+) + H2O = (2S,4S)-4-hydroxy-2,3,4,5-tetrahydrodipicolinate + NADPH + H(+). It participates in amino-acid biosynthesis; L-lysine biosynthesis via DAP pathway; (S)-tetrahydrodipicolinate from L-aspartate: step 4/4. Catalyzes the conversion of 4-hydroxy-tetrahydrodipicolinate (HTPA) to tetrahydrodipicolinate. This is 4-hydroxy-tetrahydrodipicolinate reductase from Methanococcus aeolicus (strain ATCC BAA-1280 / DSM 17508 / OCM 812 / Nankai-3).